The chain runs to 327 residues: Microtubule-associated protein RP/EB family member 2 (327 aa).

Over residues 1–17 (MPGPTQTLSPNGENNND) the composition is skewed to polar residues. Positions 1–20 (MPGPTQTLSPNGENNNDVIH) are disordered. Residues 56 to 158 (TMSRHDIIAW…FIQWFKKFFD (103 aa)) enclose the Calponin-homology (CH) domain. Disordered regions lie at residues 170 to 238 (EARQ…DKDL) and 295 to 327 (LYSSEEQESHTEQHEGEEEQEHGHEEAEQQEEY). Residues 234–304 (SDKDLETQVS…LYSSEEQESH (71 aa)) enclose the EB1 C-terminal domain.

The protein belongs to the MAPRE family.

The protein localises to the cytoplasm. The protein resides in the cytoskeleton. In terms of biological role, may be involved in microtubule polymerization, and spindle function by stabilizing microtubules and anchoring them at centrosomes. The polypeptide is Microtubule-associated protein RP/EB family member 2 (mapre2) (Xenopus laevis (African clawed frog)).